Here is a 761-residue protein sequence, read N- to C-terminus: ARF GTPase-activating protein GIT1 (761 aa).

Residues 1–124 (MSRKGPRAEV…AFVHKLPCRD (124 aa)) form the Arf-GAP domain. The interval 1–124 (MSRKGPRAEV…AFVHKLPCRD (124 aa)) is interaction with gamma-tubulin and localization to the centrosome. The C4-type zinc finger occupies 11-34 (CADCSAPDPGWASISRGVLVCDEC). 3 ANK repeats span residues 132–161 (DLSK…QANF), 166–195 (KGTT…DPGS), and 199–228 (NGRT…ELTD). Phosphotyrosine is present on Tyr-224. Residues 245-365 (HYIIPQMADS…QGKSLSSPTD (121 aa)) are interaction with PCLO. An interaction with PTK2/FAK1 region spans residues 253-415 (DSLDLSELAK…NRARSMDSSD (163 aa)). The interval 254–367 (SLDLSELAKA…KSLSSPTDNL (114 aa)) is interaction with ARHGEF7. Positions 354 to 416 (RQQGKSLSSP…RARSMDSSDL (63 aa)) are disordered. The segment covering 357–374 (GKSLSSPTDNLELSLRSQ) has biased composition (polar residues). Ser-359 and Ser-362 each carry phosphoserine. The residue at position 364 (Thr-364) is a Phosphothreonine. An interaction with NCK2 and GRIN3A region spans residues 366–587 (NLELSLRSQS…QEGSRHTSKL (222 aa)). The tract at residues 366–587 (NLELSLRSQS…QEGSRHTSKL (222 aa)) is required for localization at synapses. Ser-370 and Ser-375 each carry phosphoserine. Tyr-383 carries the phosphotyrosine modification. Phosphoserine is present on residues Ser-385 and Ser-388. The span at 385 to 394 (SVASDEDTDQ) shows a compositional bias: acidic residues. Thr-392 carries the post-translational modification Phosphothreonine. Residues Ser-410, Ser-413, and Ser-417 each carry the phosphoserine modification. The interaction with MAPK1 stretch occupies residues 411–466 (MDSSDLSDGAVTLQEYLELKKALATSEAKVQQLMKVNSSLSDELRRLQREIHKLQA). An interaction with IKBKG region spans residues 420-620 (AVTLQEYLEL…EGKRFLELGK (201 aa)). A coiled-coil region spans residues 440-474 (VQQLMKVNSSLSDELRRLQREIHKLQAENLQLRQP). Residues 471 to 501 (LRQPPGPVPTPPLPSERAEHTPMAPGGSTHR) form a disordered region. A compositionally biased stretch (pro residues) spans 474-484 (PPGPVPTPPLP). The residue at position 480 (Thr-480) is a Phosphothreonine. Residues Ser-498 and Ser-536 each carry the phosphoserine modification. A Phosphothreonine modification is found at Thr-537. Residues Tyr-545 and Tyr-554 each carry the phosphotyrosine modification. Residues Ser-561, Ser-571, Ser-592, and Ser-596 each carry the phosphoserine modification. A disordered region spans residues 572–606 (PLLSCSQEGSRHTSKLSRHGSGADSDYENTQSGDP). Residue Thr-601 is modified to Phosphothreonine. Phosphoserine is present on Ser-630. Positions 637–761 (PGLPSTEDVI…VTITTREKKQ (125 aa)) are interaction with PXN and TGFB1I1.

Forms homodimers and possibly oligomers. May forms heterooligomers with GIT2. Interacts with G protein-coupled receptor kinases, including GRK2, GRK3, GRK5 and GRK6. Interacts with PPFIA1, PPFIA2 and PPFIA4. Interacts with GRIP1 and forms a ternary complex with PPFIA1 and GRIP1. Directly interacts with ARHGEF7/beta-PIX, forming in vitro a heptameric complex made of a GIT1 dimer and an ARHGEF7 trimer. Directly interacts with PXN/paxillin; this interaction is enhanced in the presence of ARHGEF7. Directly interacts (via C-terminus) with TGFB1I1/Hic-5 (via LD motif 3). Directly interacts with PTK2/FAK1. May interact with PTK2B/PYK2; this interaction may be indirect. Interacts with AMPA receptors GRIA2/3. Directly interacts with protein Piccolo/PCLO. Forms a complex with Ephrin-B1/EFNB1 and NCK2/GRB4 (via SH2); this interaction is important for spine morphogenesis and synapse formation. Interaction with NCK2 is transient and depends upon GIT1 phosphorylation at Tyr-383. Interacts with GRIN3A/GluN3A (via C-terminus); this interaction competes with GIT1 interaction with ARHGEF7 and limits synaptic localization of GIT1. Interacts with IKBKG/NEMO in resting bone mesenchymal stem cells, as well as in TNF-stimulated cells; this interaction may increase IKBKG affinity for 'Lys-63'-linked polyubiquitin chains. Interacts with GABA(A) receptors, including GABRB3 and GABRG2. Interacts with SCRIB. Interacts (via N- and C-terminus) with ENTR1/SDCCAG3 (via N-terminus); this interaction is direct. May form a tripartite complex with ENTR1 and PTPN13. Interacts with YWHAZ. Interacts with PAK1. Interacts with PAK3. Directly interacts (via N-terminus) with gamma-tubulin. Interacts with MAPK1 and MAPK3; this interaction is required for MAPK1/3 recruitment to focal adhesions. Phosphorylated by PAK1. Phosphorylation on tyrosine residues may be catalyzed by PTK2/FAK1 and SRC in growing fibroblasts. Phosphorylation at Tyr-383 is induced by activation of Ephrin-B1/EFNB1 and catalyzed by SRC family kinases. It is required for the interaction with NCK2 and for GIT1 recruitment to synapses in hippocampal neurons.

The protein localises to the cytoplasm. It localises to the synapse. It is found in the presynapse. The protein resides in the postsynapse. Its subcellular location is the postsynaptic density. The protein localises to the cell junction. It localises to the focal adhesion. It is found in the cell projection. The protein resides in the lamellipodium. Its subcellular location is the cytoskeleton. The protein localises to the microtubule organizing center. It localises to the centrosome. It is found in the spindle pole. GTPase-activating protein for ADP ribosylation factor family members, including ARF1. Multidomain scaffold protein that interacts with numerous proteins and therefore participates in many cellular functions, including receptor internalization, focal adhesion remodeling, and signaling by both G protein-coupled receptors and tyrosine kinase receptors. Through PAK1 activation, positively regulates microtubule nucleation during interphase. Plays a role in the regulation of cytokinesis; for this function, may act in a pathway also involving ENTR1 and PTPN13. May promote cell motility both by regulating focal complex dynamics and by local activation of RAC1. May act as scaffold for MAPK1/3 signal transduction in focal adhesions. Recruits MAPK1/3/ERK1/2 to focal adhesions after EGF stimulation via a Src-dependent pathway, hence stimulating cell migration. Plays a role in brain development and function. Involved in the regulation of spine density and synaptic plasticity that is required for processes involved in learning. Plays an important role in dendritic spine morphogenesis and synapse formation. In hippocampal neurons, recruits guanine nucleotide exchange factors (GEFs), such as ARHGEF7/beta-PIX, to the synaptic membrane. These in turn locally activate RAC1, which is an essential step for spine morphogenesis and synapse formation. May contribute to the organization of presynaptic active zones through oligomerization and formation of a Piccolo/PCLO-based protein network, which includes ARHGEF7/beta-PIX and FAK1. In neurons, through its interaction with liprin-alpha family members, may be required for AMPA receptor (GRIA2/3) proper targeting to the cell membrane. In complex with GABA(A) receptors and ARHGEF7, plays a crucial role in regulating GABA(A) receptor synaptic stability, maintaining GPHN/gephyrin scaffolds and hence GABAergic inhibitory synaptic transmission, by locally coordinating RAC1 and PAK1 downstream effector activity, leading to F-actin stabilization. May also be important for RAC1 downstream signaling pathway through PAK3 and regulation of neuronal inhibitory transmission at presynaptic input. Required for successful bone regeneration during fracture healing. The function in intramembranous ossification may, at least partly, exerted by macrophages in which GIT1 is a key negative regulator of redox homeostasis, IL1B production, and glycolysis, acting through the ERK1/2/NRF2/NFE2L2 axis. May play a role in angiogenesis during fracture healing. In this process, may regulate activation of the canonical NF-kappa-B signal in bone mesenchymal stem cells by enhancing the interaction between NEMO and 'Lys-63'-ubiquitinated RIPK1/RIP1, eventually leading to enhanced production of VEGFA and others angiogenic factors. Essential for VEGF signaling through the activation of phospholipase C-gamma and ERK1/2, hence may control endothelial cell proliferation and angiogenesis. The protein is ARF GTPase-activating protein GIT1 (GIT1) of Homo sapiens (Human).